We begin with the raw amino-acid sequence, 210 residues long: Isochorismatase domain-containing protein 2B (210 aa).

Lys178 is modified (N6-succinyllysine).

It belongs to the isochorismatase family. Interacts with CDKN2A. Ubiquitous. Expressed predominantly in uterus, stomach and urinary tract.

It is found in the cytoplasm. The protein resides in the nucleus. This Mus musculus (Mouse) protein is Isochorismatase domain-containing protein 2B (Isoc2b).